The following is a 290-amino-acid chain: Cbb3-type cytochrome c oxidase subunit FixP (290 aa).

The chain crosses the membrane as a helical span at residues 33-53; that stretch reads WWVITFYITIVWAIGYWIVYP. 2 Cytochrome c domains span residues 109-198 and 206-287; these read LARA…RSLS and YDAA…HSLG. Positions 122, 125, 126, 173, 219, 222, 223, and 264 each coordinate heme c.

This sequence belongs to the CcoP / FixP family. As to quaternary structure, component of the cbb3-type cytochrome c oxidase at least composed of FixN, FixO, FixQ and FixP. Heme c serves as cofactor.

The protein resides in the cell inner membrane. It participates in energy metabolism; oxidative phosphorylation. Functionally, C-type cytochrome. Part of the cbb3-type cytochrome c oxidase complex. FixP subunit is required for transferring electrons from donor cytochrome c via its heme groups to FixO subunit. From there, electrons are shuttled to the catalytic binuclear center of FixN subunit where oxygen reduction takes place. The complex also functions as a proton pump. The polypeptide is Cbb3-type cytochrome c oxidase subunit FixP (Bradyrhizobium sp. (strain ORS 278)).